Consider the following 634-residue polypeptide: 1-deoxy-D-xylulose-5-phosphate synthase (634 aa).

Residues histidine 79 and 120 to 122 (GHA) contribute to the thiamine diphosphate site. Aspartate 151 contributes to the Mg(2+) binding site. Thiamine diphosphate is bound by residues 152–153 (GS), asparagine 180, tyrosine 292, and glutamate 376. A Mg(2+)-binding site is contributed by asparagine 180.

Belongs to the transketolase family. DXPS subfamily. Homodimer. It depends on Mg(2+) as a cofactor. Requires thiamine diphosphate as cofactor.

It carries out the reaction D-glyceraldehyde 3-phosphate + pyruvate + H(+) = 1-deoxy-D-xylulose 5-phosphate + CO2. It functions in the pathway metabolic intermediate biosynthesis; 1-deoxy-D-xylulose 5-phosphate biosynthesis; 1-deoxy-D-xylulose 5-phosphate from D-glyceraldehyde 3-phosphate and pyruvate: step 1/1. In terms of biological role, catalyzes the acyloin condensation reaction between C atoms 2 and 3 of pyruvate and glyceraldehyde 3-phosphate to yield 1-deoxy-D-xylulose-5-phosphate (DXP). This Porphyromonas gingivalis (strain ATCC BAA-308 / W83) protein is 1-deoxy-D-xylulose-5-phosphate synthase.